We begin with the raw amino-acid sequence, 461 residues long: Zinc transporter 6 (461 aa).

The Cytoplasmic segment spans residues 1-33 (MGTIHLFRKPQRSFFGKLLREFRLVAADRRSWK). Residues 34 to 54 (ILLFGVINLICTGFLLMWCSS) traverse the membrane as a helical segment. Over 55 to 64 (TNSIALTAYT) the chain is Extracellular. Residues 65–85 (YLTIFDLFSLMTCLISYWVTL) traverse the membrane as a helical segment. Residues 86-98 (RKPSPVYSFGFER) are Cytoplasmic-facing. The helical transmembrane segment at 99-119 (LEVLAVFASTVLAQLGALFIL) threads the bilayer. The Extracellular segment spans residues 120–134 (KESAERFLEQPEIHT). A helical transmembrane segment spans residues 135-155 (GRLLVGTFVALCFNLFTMLSI). Residues 156 to 200 (RNKPFAYVSEAASTSWLQEHVADLSRSLCGIIPGLSSIFLPRMNP) are Cytoplasmic-facing. Residues 201 to 221 (FVLIDLAGAFALCITYMLIEI) traverse the membrane as a helical segment. At 222–223 (NN) the chain is on the extracellular side. Residues 224-244 (YFAVDTASAIAIALMTFGTMY) traverse the membrane as a helical segment. Over 245 to 461 (PMSVYSGKVL…TNNRIGQPRP (217 aa)) the chain is Cytoplasmic. The interval 371-392 (NPVTSTPAKPSSPPPEFSFNTP) is disordered.

This sequence belongs to the cation diffusion facilitator (CDF) transporter (TC 2.A.4) family. SLC30A subfamily. Heterodimer with SLC30A5; form a functional zinc ion transmembrane transporter. In terms of tissue distribution, expressed in brain; especially in cerebellum, hippocampus, parahippocampal gyrus, superior and middle temporal gyrus. Also expressed in B-cells, colon, eye, and lung. Lower expression was present in bone, brain, cervix, ear, heart, kidney, muscle, nerve, pancreas, prostate, skin, stomach, and testis.

The protein localises to the golgi apparatus. It localises to the trans-Golgi network membrane. Functionally, has probably no intrinsic transporter activity but together with SLC30A5 forms a functional zinc ion:proton antiporter heterodimer, mediating zinc entry into the lumen of organelles along the secretory pathway. As part of that zinc ion:proton antiporter, contributes to zinc ion homeostasis within the early secretory pathway and regulates the activation and folding of enzymes like alkaline phosphatases and enzymes involved in phosphatidylinositol glycan anchor biosynthesis. The polypeptide is Zinc transporter 6 (Homo sapiens (Human)).